Here is a 212-residue protein sequence, read N- to C-terminus: Dephospho-CoA kinase (212 aa).

In terms of domain architecture, DPCK spans 6–211; the sequence is RLGLTGGIGS…LSCQPLSPNQ (206 aa). 14 to 19 contacts ATP; the sequence is GSGKST.

Belongs to the CoaE family.

Its subcellular location is the cytoplasm. It catalyses the reaction 3'-dephospho-CoA + ATP = ADP + CoA + H(+). Its pathway is cofactor biosynthesis; coenzyme A biosynthesis; CoA from (R)-pantothenate: step 5/5. Catalyzes the phosphorylation of the 3'-hydroxyl group of dephosphocoenzyme A to form coenzyme A. This is Dephospho-CoA kinase from Albidiferax ferrireducens (strain ATCC BAA-621 / DSM 15236 / T118) (Rhodoferax ferrireducens).